We begin with the raw amino-acid sequence, 665 residues long: Protein kinase domain-containing protein ppk2 (665 aa).

4 disordered regions span residues 42–63 (PNDS…KKKF), 82–152 (GNST…LSRS), 187–217 (LNSQ…SSMN), and 286–343 (AESL…VGHP). Residues 82-104 (GNSTRSPPFHLQNQKSNGQSEVW) show a composition bias toward polar residues. 2 stretches are compositionally biased toward low complexity: residues 137 to 152 (SLSR…LSRS) and 206 to 217 (TNRLSSSTSSMN). Polar residues predominate over residues 294–316 (SATTIQQGDVSSYPLSRSVSTPV). S358 carries the post-translational modification Phosphoserine. The Protein kinase domain occupies 388 to 637 (YTDFTKICQQ…NMLLETSSFL (250 aa)). ATP-binding positions include 394–402 (ICQQDTVGT) and K417.

Its subcellular location is the cytoplasm. The protein is Protein kinase domain-containing protein ppk2 (ppk2) of Schizosaccharomyces pombe (strain 972 / ATCC 24843) (Fission yeast).